The chain runs to 350 residues: Heat-inducible transcription repressor HrcA (350 aa).

The protein belongs to the HrcA family.

Its function is as follows. Negative regulator of class I heat shock genes (grpE-dnaK-dnaJ and groELS operons). Prevents heat-shock induction of these operons. This is Heat-inducible transcription repressor HrcA from Xanthomonas axonopodis pv. citri (strain 306).